We begin with the raw amino-acid sequence, 360 residues long: Aminomethyltransferase (360 aa).

Belongs to the GcvT family. In terms of assembly, the glycine cleavage system is composed of four proteins: P, T, L and H.

The enzyme catalyses N(6)-[(R)-S(8)-aminomethyldihydrolipoyl]-L-lysyl-[protein] + (6S)-5,6,7,8-tetrahydrofolate = N(6)-[(R)-dihydrolipoyl]-L-lysyl-[protein] + (6R)-5,10-methylene-5,6,7,8-tetrahydrofolate + NH4(+). In terms of biological role, the glycine cleavage system catalyzes the degradation of glycine. This chain is Aminomethyltransferase, found in Legionella pneumophila (strain Corby).